We begin with the raw amino-acid sequence, 89 residues long: Large ribosomal subunit protein bL27 (89 aa).

A disordered region spans residues 1–22 (MAHKKGTGSTRNGRDSNAQRLG). A compositionally biased stretch (polar residues) spans 7 to 19 (TGSTRNGRDSNAQ).

It belongs to the bacterial ribosomal protein bL27 family.

This Cyanothece sp. (strain PCC 7425 / ATCC 29141) protein is Large ribosomal subunit protein bL27.